We begin with the raw amino-acid sequence, 228 residues long: Probable septum site-determining protein MinC (228 aa).

Belongs to the MinC family. Interacts with MinD and FtsZ.

Cell division inhibitor that blocks the formation of polar Z ring septums. Rapidly oscillates between the poles of the cell to destabilize FtsZ filaments that have formed before they mature into polar Z rings. Prevents FtsZ polymerization. This is Probable septum site-determining protein MinC from Yersinia pseudotuberculosis serotype O:1b (strain IP 31758).